The sequence spans 432 residues: Glutamyl-tRNA reductase (432 aa).

Residues 55–58 (TCNR), Ser-114, 119–121 (ETQ), and Gln-125 each bind substrate. Cys-56 serves as the catalytic Nucleophile. NADP(+) is bound at residue 194-199 (GAGEMI).

It belongs to the glutamyl-tRNA reductase family. In terms of assembly, homodimer.

It catalyses the reaction (S)-4-amino-5-oxopentanoate + tRNA(Glu) + NADP(+) = L-glutamyl-tRNA(Glu) + NADPH + H(+). It functions in the pathway porphyrin-containing compound metabolism; protoporphyrin-IX biosynthesis; 5-aminolevulinate from L-glutamyl-tRNA(Glu): step 1/2. In terms of biological role, catalyzes the NADPH-dependent reduction of glutamyl-tRNA(Glu) to glutamate 1-semialdehyde (GSA). This is Glutamyl-tRNA reductase from Burkholderia orbicola (strain AU 1054).